We begin with the raw amino-acid sequence, 452 residues long: Tubulin gamma chain (452 aa).

142–148 (AGGTGSG) serves as a coordination point for GTP.

The protein belongs to the tubulin family.

The protein localises to the cytoplasm. It localises to the cytoskeleton. It is found in the microtubule organizing center. The protein resides in the centrosome. Functionally, tubulin is the major constituent of microtubules. The gamma chain is found at microtubule organizing centers (MTOC) such as the spindle poles or the centrosome, suggesting that it is involved in the minus-end nucleation of microtubule assembly. This Plasmodium falciparum (isolate NF54) protein is Tubulin gamma chain (G-TUB).